Reading from the N-terminus, the 147-residue chain is Large ribosomal subunit protein uL13 (147 aa).

The protein belongs to the universal ribosomal protein uL13 family. Part of the 50S ribosomal subunit.

In terms of biological role, this protein is one of the early assembly proteins of the 50S ribosomal subunit, although it is not seen to bind rRNA by itself. It is important during the early stages of 50S assembly. This chain is Large ribosomal subunit protein uL13, found in Lactobacillus acidophilus (strain ATCC 700396 / NCK56 / N2 / NCFM).